The primary structure comprises 496 residues: Maturase K (496 aa).

Belongs to the intron maturase 2 family. MatK subfamily.

The protein localises to the plastid. It is found in the chloroplast. Usually encoded in the trnK tRNA gene intron. Probably assists in splicing its own and other chloroplast group II introns. This is Maturase K from Paeonia lactiflora (Chinese peony).